Consider the following 190-residue polypeptide: NADH-quinone oxidoreductase subunit B (190 aa).

The [4Fe-4S] cluster site is built by Cys-39, Cys-40, Cys-104, and Cys-135.

This sequence belongs to the complex I 20 kDa subunit family. NDH-1 is composed of 14 different subunits. Subunits NuoB, C, D, E, F, and G constitute the peripheral sector of the complex. [4Fe-4S] cluster serves as cofactor.

The protein localises to the cell inner membrane. It carries out the reaction a quinone + NADH + 5 H(+)(in) = a quinol + NAD(+) + 4 H(+)(out). NDH-1 shuttles electrons from NADH, via FMN and iron-sulfur (Fe-S) centers, to quinones in the respiratory chain. The immediate electron acceptor for the enzyme in this species is believed to be a menaquinone. Couples the redox reaction to proton translocation (for every two electrons transferred, four hydrogen ions are translocated across the cytoplasmic membrane), and thus conserves the redox energy in a proton gradient. The protein is NADH-quinone oxidoreductase subunit B of Chlorobium phaeobacteroides (strain BS1).